Here is a 256-residue protein sequence, read N- to C-terminus: tRNA (guanine-N(7)-)-methyltransferase (256 aa).

A compositionally biased stretch (polar residues) spans 1 to 15 (MVATGGQAQDQSHNQ). Residues 1-22 (MVATGGQAQDQSHNQEPGVLCP) are disordered. S-adenosyl-L-methionine-binding positions include Gly79, 102–103 (EI), 137–138 (NA), and Leu157. Asp160 is a catalytic residue. Position 235-237 (235-237 (SEE)) interacts with S-adenosyl-L-methionine.

This sequence belongs to the class I-like SAM-binding methyltransferase superfamily. TrmB family.

It is found in the nucleus. It carries out the reaction guanosine(46) in tRNA + S-adenosyl-L-methionine = N(7)-methylguanosine(46) in tRNA + S-adenosyl-L-homocysteine. It functions in the pathway tRNA modification; N(7)-methylguanine-tRNA biosynthesis. Its function is as follows. Catalyzes the formation of N(7)-methylguanine at position 46 (m7G46) in tRNA. This is tRNA (guanine-N(7)-)-methyltransferase from Drosophila yakuba (Fruit fly).